Reading from the N-terminus, the 66-residue chain is Phylloseptin-S6 (66 aa).

The N-terminal stretch at 1–22 (MAFLKKSLFLVLFLGLVSLSIC) is a signal peptide. Residues 23–46 (EEEKRETEEEEHDQEEDDKSEEKR) constitute a propeptide that is removed on maturation. A disordered region spans residues 25–44 (EKRETEEEEHDQEEDDKSEE). Residues 30–41 (EEEEHDQEEDDK) are compositionally biased toward acidic residues. L65 bears the Leucine amide mark.

It belongs to the frog skin active peptide (FSAP) family. Phylloseptin subfamily. In terms of tissue distribution, expressed by the skin glands.

It is found in the secreted. It localises to the target cell membrane. Antimicrobial peptide with high activity against Gram-positive bacteria, low activity against Gram-negative bacteria, and moderate activity against fungi. Acts by causing bacterial membrane disruption inducing leakage of the intracellular content followed by cell death. It adopts an alpha-helical amphipathic structure in membrane environments. Also shows highly potent antiparasitic activity against Leishmania species. Shows moderate hemolytic activity on human erythrocytes. Is also active on human monocytes. This is Phylloseptin-S6 from Phyllomedusa sauvagei (Sauvage's leaf frog).